Here is a 98-residue protein sequence, read N- to C-terminus: Small ribosomal subunit protein uS17 (98 aa).

Belongs to the universal ribosomal protein uS17 family. As to quaternary structure, part of the 30S ribosomal subunit.

In terms of biological role, one of the primary rRNA binding proteins, it binds specifically to the 5'-end of 16S ribosomal RNA. In Carboxydothermus hydrogenoformans (strain ATCC BAA-161 / DSM 6008 / Z-2901), this protein is Small ribosomal subunit protein uS17.